Reading from the N-terminus, the 130-residue chain is Glycine cleavage system H protein (130 aa).

One can recognise a Lipoyl-binding domain in the interval 24 to 106 (GIKVGISAFA…YQEGWLLKIT (83 aa)). The residue at position 65 (Lys-65) is an N6-lipoyllysine.

This sequence belongs to the GcvH family. In terms of assembly, the glycine cleavage system is composed of four proteins: P, T, L and H. Requires (R)-lipoate as cofactor.

Functionally, the glycine cleavage system catalyzes the degradation of glycine. The H protein shuttles the methylamine group of glycine from the P protein to the T protein. In Synechococcus sp. (strain RCC307), this protein is Glycine cleavage system H protein.